The chain runs to 400 residues: Argininosuccinate synthase (400 aa).

ATP is bound by residues Ala6–Ser14 and Ala33. Residues Tyr84 and Ser89 each contribute to the L-citrulline site. Gly114 serves as a coordination point for ATP. L-aspartate-binding residues include Thr116, Asn120, and Asp121. Asn120 provides a ligand contact to L-citrulline. Residues Arg124, Ser173, Ser182, Glu258, and Tyr270 each contribute to the L-citrulline site.

Belongs to the argininosuccinate synthase family. Type 1 subfamily. As to quaternary structure, homotetramer.

Its subcellular location is the cytoplasm. It carries out the reaction L-citrulline + L-aspartate + ATP = 2-(N(omega)-L-arginino)succinate + AMP + diphosphate + H(+). Its pathway is amino-acid biosynthesis; L-arginine biosynthesis; L-arginine from L-ornithine and carbamoyl phosphate: step 2/3. The polypeptide is Argininosuccinate synthase (Thermus thermophilus (strain ATCC 27634 / DSM 579 / HB8)).